A 365-amino-acid chain; its full sequence is DNA replication and repair protein RecF (365 aa).

G30–T37 provides a ligand contact to ATP.

The protein belongs to the RecF family.

Its subcellular location is the cytoplasm. In terms of biological role, the RecF protein is involved in DNA metabolism; it is required for DNA replication and normal SOS inducibility. RecF binds preferentially to single-stranded, linear DNA. It also seems to bind ATP. In Streptococcus pneumoniae serotype 4 (strain ATCC BAA-334 / TIGR4), this protein is DNA replication and repair protein RecF.